A 277-amino-acid polypeptide reads, in one-letter code: MSAAMGRPFLKMNGLGNDFVVVETRSAPFEPTAAQVRAIADRATGIGCDQLIAVDPAEGADAHVRFWNADGEEVGACGNGTRCVGWLLMQSSGKDEAVIETRAGRLVATRAGERLVSVDMGPPRLEWNEIPLAEPHDTRALDVVLYHHADLMAPPGCVSMGNPHVVFFVPDAEQAPAAEAGPAIEGHPLFPEHVNVGFAQVKAPDRIRLRVWERGAGLTKACGTGACAAMVAASRRGLIGRHATMELDGGELFVEWRADGHVIMTGPAAVDFQGELP.

Substrate is bound by residues Asn-17, Gln-50, and Asn-68. Cys-77 functions as the Proton donor in the catalytic mechanism. Residues 78–79 (GN), Asn-162, Asn-195, and 213–214 (ER) contribute to the substrate site. Cys-222 acts as the Proton acceptor in catalysis. 223–224 (GT) lines the substrate pocket.

This sequence belongs to the diaminopimelate epimerase family. In terms of assembly, homodimer.

It is found in the cytoplasm. It carries out the reaction (2S,6S)-2,6-diaminopimelate = meso-2,6-diaminopimelate. It functions in the pathway amino-acid biosynthesis; L-lysine biosynthesis via DAP pathway; DL-2,6-diaminopimelate from LL-2,6-diaminopimelate: step 1/1. Functionally, catalyzes the stereoinversion of LL-2,6-diaminopimelate (L,L-DAP) to meso-diaminopimelate (meso-DAP), a precursor of L-lysine and an essential component of the bacterial peptidoglycan. The sequence is that of Diaminopimelate epimerase from Phenylobacterium zucineum (strain HLK1).